Here is a 693-residue protein sequence, read N- to C-terminus: E3 ubiquitin-protein ligase MARCHF7 (693 aa).

An N-acetylmethionine modification is found at M1. Disordered stretches follow at residues 1 to 43 (MESK…RDSS), 69 to 136 (ESEI…LGSF), 158 to 281 (LMDY…RRTT), 296 to 342 (FFSR…EGRA), 361 to 430 (LSQN…RDSN), 445 to 475 (AANR…RNPG), and 512 to 533 (WNST…PEKL). Composition is skewed to polar residues over residues 14 to 36 (VQPS…LNDS), 95 to 105 (SCTNCASTSAG), 112 to 132 (LNTV…SSMV), 167 to 184 (DFTT…SYSQ), and 192 to 215 (AVST…QTVP). Positions 216–234 (SSRDSSRSSFRSHFSPRQS) are enriched in low complexity. Polar residues predominate over residues 236 to 267 (SFRNSSHPAFSYFSSRNETPTISNSERGSSQR). Residues 268 to 279 (PYRESSDNEGRR) are compositionally biased toward basic and acidic residues. The segment covering 296-305 (FFSRRSSQDS) has biased composition (low complexity). A compositionally biased stretch (polar residues) spans 306-323 (LNTRSLSSENYISPRTLT). At S318 the chain carries Phosphoserine. Over residues 324–337 (SQSRNNGTSSSSDV) the composition is skewed to low complexity. S390 carries the phosphoserine modification. Positions 451 to 463 (ASGASSSAAAGGS) are enriched in low complexity. A compositionally biased stretch (basic and acidic residues) spans 517–533 (GKNDKAKSAPSRDPEKL). The segment at 546-616 (DDEEEGDLCR…ELCKEKLQLN (71 aa)) adopts an RING-CH-type zinc-finger fold. Positions 554, 557, 572, 574, 582, 585, 606, and 609 each coordinate Zn(2+). T688 is subject to Phosphothreonine. At S689 the chain carries Phosphoserine.

Expressed in brain, thymus, muscle and kidney.

It is found in the cytoplasm. The catalysed reaction is S-ubiquitinyl-[E2 ubiquitin-conjugating enzyme]-L-cysteine + [acceptor protein]-L-lysine = [E2 ubiquitin-conjugating enzyme]-L-cysteine + N(6)-ubiquitinyl-[acceptor protein]-L-lysine.. It participates in protein modification; protein ubiquitination. Functionally, E3 ubiquitin-protein ligase which may specifically enhance the E2 activity of HIP2. E3 ubiquitin ligases accept ubiquitin from an E2 ubiquitin-conjugating enzyme in the form of a thioester and then directly transfer the ubiquitin to targeted substrates. May be involved in T-cell proliferation by regulating LIF secretion. May play a role in lysosome homeostasis. Promotes 'Lys-6', 'Lys-11' and 'Lys-63'-linked mixed polyubiquitination on ATG14 leading to the inhibition of autophagy by impairing the interaction between ATG14 and STX7. Participates in the dopamine-mediated negative regulation of the NLRP3 inflammasome by promoting its uibiquitination and subsequent degradation. This Mus musculus (Mouse) protein is E3 ubiquitin-protein ligase MARCHF7 (Marchf7).